A 391-amino-acid polypeptide reads, in one-letter code: Oxytocin receptor (391 aa).

The Extracellular portion of the chain corresponds to 1–38 (MEGAFAANWSAEAVNGSAAPPGTEGNRTAGPPQRNEAL). 3 N-linked (GlcNAc...) asparagine glycosylation sites follow: N8, N15, and N26. Residues 39–63 (ARVEVAVLSLILFLALSGNACVLLA) form a helical membrane-spanning segment. Topologically, residues 64–74 (LRTTRHKHSRL) are cytoplasmic. Residues 75 to 97 (FFFMKHLSIADLAVAVFQVLPQL) traverse the membrane as a helical segment. The Extracellular portion of the chain corresponds to 98–113 (LWDITFRFYGPDLLCR). A disulfide bridge connects residues C112 and C187. A helical transmembrane segment spans residues 114–135 (LVKYLQVVGMFASTYLLLLMSL). At 136-154 (DRCLAICQPLRSLRRRTDR) the chain is on the cytoplasmic side. Residues 155–175 (LAVLATWLGCLVASAPQVHIF) traverse the membrane as a helical segment. Topologically, residues 176-202 (SLREVADGVFDCWAVFIQPWGPKAYIT) are extracellular. The helical transmembrane segment at 203-225 (WITLAVYIVPVIVLAACYGLISF) threads the bilayer. Over 226 to 277 (KIWQNLRLKTEAAAAEASAGAEGAAADCAGRAALARVSNVKLISKAKIRTVK) the chain is Cytoplasmic. The chain crosses the membrane as a helical span at residues 278-296 (MTFIVVLAFIVCWTPFFFK). The Extracellular portion of the chain corresponds to 297-311 (QMWSVWDADAPKEAS). The helical transmembrane segment at 312–334 (AFIIAMLLASLNSCCNPWIYMLF) threads the bilayer. At 335–391 (TGHLFQDLVQRFLCCSFRRLKGSQLGETSVTKKIHSYTFVLSRHSSSQRSCSQPSTV) the chain is on the cytoplasmic side. S370 carries the post-translational modification Phosphoserine.

The protein belongs to the G-protein coupled receptor 1 family. Vasopressin/oxytocin receptor subfamily.

The protein resides in the cell membrane. Functionally, receptor for oxytocin. The activity of this receptor is mediated by G proteins which activate a phosphatidylinositol-calcium second messenger system. The protein is Oxytocin receptor (OXTR) of Ovis aries (Sheep).